Reading from the N-terminus, the 123-residue chain is MPTINQLIAKGREPAAKRNKVPALQGCPQKRGVCTRVYTTTPKKPNSALRKVAKVRLTNGYEVVSYIPGEGHNLQEHSVVLIRGGRVKDLPGVRYHILRGVLDTQGIAKRRQRRSLYGAKRPK.

At D89 the chain carries 3-methylthioaspartic acid.

It belongs to the universal ribosomal protein uS12 family. In terms of assembly, part of the 30S ribosomal subunit. Contacts proteins S8 and S17. May interact with IF1 in the 30S initiation complex.

Functionally, with S4 and S5 plays an important role in translational accuracy. Interacts with and stabilizes bases of the 16S rRNA that are involved in tRNA selection in the A site and with the mRNA backbone. Located at the interface of the 30S and 50S subunits, it traverses the body of the 30S subunit contacting proteins on the other side and probably holding the rRNA structure together. The combined cluster of proteins S8, S12 and S17 appears to hold together the shoulder and platform of the 30S subunit. This is Small ribosomal subunit protein uS12 from Gluconacetobacter diazotrophicus (strain ATCC 49037 / DSM 5601 / CCUG 37298 / CIP 103539 / LMG 7603 / PAl5).